We begin with the raw amino-acid sequence, 442 residues long: UDP-N-acetylmuramoylalanine--D-glutamate ligase (442 aa).

115 to 121 (GSNGKST) provides a ligand contact to ATP.

The protein belongs to the MurCDEF family.

The protein localises to the cytoplasm. The enzyme catalyses UDP-N-acetyl-alpha-D-muramoyl-L-alanine + D-glutamate + ATP = UDP-N-acetyl-alpha-D-muramoyl-L-alanyl-D-glutamate + ADP + phosphate + H(+). It participates in cell wall biogenesis; peptidoglycan biosynthesis. In terms of biological role, cell wall formation. Catalyzes the addition of glutamate to the nucleotide precursor UDP-N-acetylmuramoyl-L-alanine (UMA). This chain is UDP-N-acetylmuramoylalanine--D-glutamate ligase, found in Aliivibrio salmonicida (strain LFI1238) (Vibrio salmonicida (strain LFI1238)).